The primary structure comprises 586 residues: MSLSNKKTQKIASDLLPARLSQARGDGTLDLLITNVQMLDVITGDIYPTCIAIGGEHIVGVGMEYQTQSARRTWNALGAFVTPGFIDGHLHIESSMMSPFEFEKATLPLGTTTAICDPHEITNVLGGRGFSWFLRSSELMHQNLFVQMSSCVPALPGFETTGSDFPLEEMKSFKDHPSVLGLAEMMNFPGVIHADEEVLAKIEAFDDLNMDGHAPLLRGKALNAYLLAGIQNCHETVTLEEGREKLQKGMGLIIREGSVAKNLRTLAPLVNEFSSPQCLLCTDDRNPFEIAHEGHINYLIKELINKHGVAVHVAYRLATYSAARHFGLKRLGLVAPGKKADLVFLKDLKAVDIQEVMIGGKFVSELKLQDSLQEKLQTSQPPLENTMKRSPLTEKELTVNLLPGVYNVIEIVPHEIITQHLTVAFDGQKFAESDVLYMANIERYGKGLPPALGLVKGMGLKSGALASSVAHDSHNIMVIGTNPADMVLAVNTLIKSGGGFAVADQGEIKALVELPIAGLLSLKSAEEIKDGIADLKTAFRSLGVHLDEPFIQMAFLALPVIPTLKLTDRGLVNVTNFSFIPLQVEA.

This sequence belongs to the metallo-dependent hydrolases superfamily. Adenine deaminase family. It depends on Mn(2+) as a cofactor.

The enzyme catalyses adenine + H2O + H(+) = hypoxanthine + NH4(+). This Bdellovibrio bacteriovorus (strain ATCC 15356 / DSM 50701 / NCIMB 9529 / HD100) protein is Adenine deaminase.